Consider the following 415-residue polypeptide: Homoserine O-succinyltransferase (415 aa).

The AB hydrolase-1 domain occupies 69 to 383 (NAVLVCHALN…PHGHDAFLLD (315 aa)). The active-site Nucleophile is serine 175. Residue arginine 245 participates in substrate binding. Active-site residues include aspartate 344 and histidine 377. Aspartate 378 lines the substrate pocket.

It belongs to the AB hydrolase superfamily. MetX family. Homodimer.

The protein localises to the cytoplasm. It catalyses the reaction L-homoserine + succinyl-CoA = O-succinyl-L-homoserine + CoA. The protein operates within amino-acid biosynthesis; L-methionine biosynthesis via de novo pathway; O-succinyl-L-homoserine from L-homoserine: step 1/1. Functionally, transfers a succinyl group from succinyl-CoA to L-homoserine, forming succinyl-L-homoserine. The chain is Homoserine O-succinyltransferase from Bordetella parapertussis (strain 12822 / ATCC BAA-587 / NCTC 13253).